The chain runs to 659 residues: Serine/threonine-protein kinase StkP (659 aa).

Over 1–342 (MIQIGKIFAG…PQAPKKHRFK (342 aa)) the chain is Cytoplasmic. A Protein kinase domain is found at 12 to 273 (YRIVKQIGRG…EMYVDLSSSL (262 aa)). Residues 18 to 26 (IGRGGMADV) and lysine 42 each bind ATP. Aspartate 136 (proton acceptor) is an active-site residue. A helical membrane pass occupies residues 343–363 (MRYLILLASLVLVAASLIWIL). The Extracellular portion of the chain corresponds to 364 to 659 (SRTPATIAIP…YKPKTTSATP (296 aa)). 4 consecutive PASTA domains span residues 366 to 433 (TPAT…VVSS), 434 to 505 (GKQS…TVAK), 506 to 577 (KATT…TVAK), and 578 to 651 (KVTS…SIYK). The tract at residues 541–561 (EEESSESEPGTIMKQSPGAGT) is disordered.

This sequence belongs to the protein kinase superfamily. Ser/Thr protein kinase family. As to quaternary structure, homodimer. StkP forms dimers through its transmembrane and extracellular domains. Dimer formation likely promotes autophosphorylation activity and might be necessary for targeting StkP substrate. Post-translationally, autophosphorylation occurs predominantly at the threonine residue and weakly at the serine residue. Dephosphorylated by PhpP.

It localises to the cell membrane. The catalysed reaction is L-seryl-[protein] + ATP = O-phospho-L-seryl-[protein] + ADP + H(+). The enzyme catalyses L-threonyl-[protein] + ATP = O-phospho-L-threonyl-[protein] + ADP + H(+). Functionally, protein kinase involved in signal transduction pathways that regulate various cellular processes. Likely senses intracellular peptidoglycan subunits present in the cell division septa of actively growing cells; thus, intracellular unlinked peptidoglycan may serve as the signal molecules that trigger StkP phosphorylation activity on a set of substrates. Plays a crucial role in the regulation of cell shape and cell division of S.pneumoniae through control of at least DivIVA activity. Is involved in competence triggering, and is required for the expression of the central competence operon comCDE. StkP also plays an important role for bacterial survival in vivo. Identified target substrates that are specifically phosphorylated by StkP in vivo, mainly on threonine residues, are DivIVA, GlmM, PpaC, MapZ, KhpB (also called EloR/Jag, shown in strains R6 and Rx1) and StkP itself. Autophosphorylated StkP is a substrate for the cotranscribed protein phosphatase PhpP (shown in the avirulent strain Rx / Cp1015); PhpP and StkP appear to constitute a functional signaling couple in vivo. The sequence is that of Serine/threonine-protein kinase StkP (stkP) from Streptococcus pneumoniae serotype 2 (strain D39 / NCTC 7466).